We begin with the raw amino-acid sequence, 2897 residues long: Chromodomain-helicase-DNA-binding protein 9 (2897 aa).

Polar residues predominate over residues 173–201; the sequence is QCTSLRSQQNRNNLNPGQNSLSQSKNFMN. 3 disordered regions span residues 173 to 265, 482 to 525, and 537 to 671; these read QCTS…CSVS, QRQP…KQEK, and AKER…SAPL. Lys-197 participates in a covalent cross-link: Glycyl lysine isopeptide (Lys-Gly) (interchain with G-Cter in SUMO2). The segment covering 220–235 has biased composition (low complexity); sequence SNSQQSISMQQFSQTS. 2 stretches are compositionally biased toward polar residues: residues 247–260 and 484–506; these read HQEG…PNMT and QPPS…TQVR. Lys-499 is subject to N6-acetyllysine. Over residues 508 to 525 the composition is skewed to basic and acidic residues; that stretch reads MSEKKQRKKVESESKQEK. Ser-550 carries the post-translational modification Phosphoserine. Residues 573–593 show a composition bias toward basic and acidic residues; the sequence is KPKDKDSKKTKTCSKLKEKTK. Lys-596 is covalently cross-linked (Glycyl lysine isopeptide (Lys-Gly) (interchain with G-Cter in SUMO2)). Ser-611 is subject to Phosphoserine. The span at 634–644 shows a compositional bias: basic residues; the sequence is RRSNRQIKRKK. Positions 645-660 are enriched in basic and acidic residues; that stretch reads YAEDIEGKQSEEEVKG. Chromo domains are found at residues 690–761 and 773–839; these read AIVD…HFFA and VEVD…RLDR. An LXXLL motif 1 motif is present at residues 868–872; it reads LNWLL. The Helicase ATP-binding domain occupies 872 to 1046; the sequence is LFNWYNRRNC…FSLLHFLEPL (175 aa). Residue 885–892 coordinates ATP; the sequence is DEMGLGKT. The short motif at 997 to 1000 is the DEAH box element; it reads DEAH. The short motif at 1036-1040 is the LXXLL motif 2 element; sequence LFSLL. One can recognise a Helicase C-terminal domain in the interval 1186–1337; the sequence is LIDKLLPKMK…KAVLQSMSGR (152 aa). The interval 1461–1484 is disordered; it reads KDELAELSEAESEGDEKPKLRRPC. Positions 1465–1474 are enriched in acidic residues; the sequence is AELSEAESEG. Ser-1468 and Ser-1472 each carry phosphoserine. The segment covering 1475-1484 has biased composition (basic and acidic residues); sequence DEKPKLRRPC. Glycyl lysine isopeptide (Lys-Gly) (interchain with G-Cter in SUMO2) cross-links involve residues Lys-1588, Lys-1738, and Lys-1903. Position 2026 is a phosphoserine (Ser-2026). The short motif at 2031–2035 is the LXXLL motif 3 element; it reads LPRLL. Residue Lys-2038 forms a Glycyl lysine isopeptide (Lys-Gly) (interchain with G-Cter in SUMO2) linkage. Disordered stretches follow at residues 2050 to 2238 and 2305 to 2337; these read ENLK…QMNN and GAAT…SKVK. Residues Ser-2058 and Ser-2059 each carry the phosphoserine modification. Lys-2074 participates in a covalent cross-link: Glycyl lysine isopeptide (Lys-Gly) (interchain with G-Cter in SUMO2). A phosphoserine mark is found at Ser-2075 and Ser-2079. A compositionally biased stretch (basic and acidic residues) spans 2094–2104; that stretch reads SGGKCETDRRM. A compositionally biased stretch (low complexity) spans 2141 to 2193; sequence SSCSSRSSSSSSSSSCSHSRSGSSSSSSSSCSSASSSSSSSTSSSSSSSSSSS. Residues 2203 to 2216 are compositionally biased toward basic and acidic residues; the sequence is AQKRESTTHMKAYD. Residues 2221-2238 are compositionally biased toward polar residues; sequence ASLSTTQDETQDSFQMNN. The tract at residues 2332 to 2481 is binds A/T-rich DNA; the sequence is QMSKVKKHVR…LSYTQPQGIP (150 aa). Glycyl lysine isopeptide (Lys-Gly) (interchain with G-Cter in SUMO2) cross-links involve residues Lys-2350, Lys-2356, and Lys-2361. Residues 2429-2436 are a.T hook-like; it reads KKRRGRRK. The short motif at 2721–2725 is the LXXLL motif 4 element; that stretch reads LPNLL. The tract at residues 2729–2777 is disordered; the sequence is GLLTKPTESGTEDKKGSDSKESEGKTERTESQSSENGGENSVSSSPSTS. Residues 2739 to 2758 show a composition bias toward basic and acidic residues; sequence TEDKKGSDSKESEGKTERTE. Positions 2759-2777 are enriched in low complexity; that stretch reads SQSSENGGENSVSSSPSTS. The short motif at 2793–2797 is the LXXLL motif 5 element; that stretch reads LNPLL. Residues 2827-2897 are disordered; the sequence is VQNKNSDLGS…SEDSDSSNED (71 aa). A compositionally biased stretch (basic and acidic residues) spans 2840–2857; sequence VEVKEEDSRIKDQEDKGG. Residue Lys-2843 forms a Glycyl lysine isopeptide (Lys-Gly) (interchain with G-Cter in SUMO2) linkage. The segment covering 2877–2888 has biased composition (low complexity); the sequence is ASSGSDSTSSSS.

Belongs to the SNF2/RAD54 helicase family. In terms of assembly, interacts with PPARA. Probably interacts with ESR1 and NR1I3. In terms of processing, phosphorylated on serine and tyrosine residues. As to expression, widely expressed at low levels. In bone marrow, expression is restricted to osteoprogenitor cells adjacent to mature osteoblasts.

It is found in the cytoplasm. It localises to the nucleus. It carries out the reaction ATP + H2O = ADP + phosphate + H(+). Functionally, probable ATP-dependent chromatin-remodeling factor. Acts as a transcriptional coactivator for PPARA and possibly other nuclear receptors. Has DNA-dependent ATPase activity and binds to A/T-rich DNA. Associates with A/T-rich regulatory regions in promoters of genes that participate in the differentiation of progenitors during osteogenesis. The polypeptide is Chromodomain-helicase-DNA-binding protein 9 (CHD9) (Homo sapiens (Human)).